The chain runs to 479 residues: Lysosomal protective protein (479 aa).

A signal peptide spans 1-27 (MFRAALWPPVLLLLQLLLLACAPGGEG). Intrachain disulfides connect Cys-87/Cys-361, Cys-239/Cys-255, Cys-240/Cys-245, and Cys-280/Cys-330. The N-linked (GlcNAc...) asparagine glycan is linked to Asn-144. Ser-177 is an active-site residue. The N-linked (GlcNAc...) asparagine glycan is linked to Asn-332. Residues Asp-399 and His-456 contribute to the active site.

It belongs to the peptidase S10 family. In terms of assembly, heterodimer of a 32 kDa chain and a 20 kDa chain; disulfide-linked.

The protein localises to the lysosome. It carries out the reaction Release of a C-terminal amino acid with broad specificity.. In terms of biological role, protective protein appears to be essential for both the activity of beta-galactosidase and neuraminidase, it associates with these enzymes and exerts a protective function necessary for their stability and activity. This protein is also a carboxypeptidase and can deamidate tachykinins. This Bos taurus (Bovine) protein is Lysosomal protective protein (CTSA).